Reading from the N-terminus, the 662-residue chain is Acetyl-coenzyme A synthetase (662 aa).

Residues R197 to K200 and T317 contribute to the CoA site. ATP is bound by residues G393–P395, D417–T422, D510, and R525. S533 serves as a coordination point for CoA. R536 serves as a coordination point for ATP. H549 and V552 together coordinate Mg(2+). K623 is subject to N6-acetyllysine.

The protein belongs to the ATP-dependent AMP-binding enzyme family. Requires Mg(2+) as cofactor. Post-translationally, acetylated. Deacetylation by the SIR2-homolog deacetylase activates the enzyme.

The enzyme catalyses acetate + ATP + CoA = acetyl-CoA + AMP + diphosphate. Its function is as follows. Catalyzes the conversion of acetate into acetyl-CoA (AcCoA), an essential intermediate at the junction of anabolic and catabolic pathways. AcsA undergoes a two-step reaction. In the first half reaction, AcsA combines acetate with ATP to form acetyl-adenylate (AcAMP) intermediate. In the second half reaction, it can then transfer the acetyl group from AcAMP to the sulfhydryl group of CoA, forming the product AcCoA. This Helicobacter pylori (strain G27) protein is Acetyl-coenzyme A synthetase.